Consider the following 203-residue polypeptide: Secreted phosphoprotein 24 (203 aa).

Positions 1 to 23 (MEQAMLKTLALLVLGMHYWCATG) are cleaved as a signal peptide. Intrachain disulfides connect Cys-86/Cys-96 and Cys-109/Cys-127. At Ser-90 the chain carries Phosphoserine. Phosphoserine is present on residues Ser-137, Ser-138, Ser-162, Ser-165, and Ser-174.

This sequence belongs to the SPP2 family. Phosphorylation sites are present in the extracellular medium.

Its subcellular location is the secreted. Its function is as follows. Could coordinate an aspect of bone turnover. This chain is Secreted phosphoprotein 24 (Spp2), found in Mus musculus (Mouse).